The chain runs to 468 residues: Neurexin-1-beta (468 aa).

The signal sequence occupies residues 1–46 (MYQRMLRCGAELGSPGGGSSGGAGGRLALLWIVPLTLSGLLGVAWG). Topologically, residues 47-391 (ASSLGAHHIH…AEVIRESSST (345 aa)) are extracellular. In terms of domain architecture, Laminin G-like spans 87 to 285 (YIFSKGGGQI…DANIAIVGNV (199 aa)). Residues Asp137 and Val154 each contribute to the Ca(2+) site. Residue Asn184 is glycosylated (N-linked (GlcNAc...) asparagine). The essential for interaction with CBLN1; modulates interaction affinity with NLGN1, NLGN2 and NLGN3; prevents interaction with DAG1/alpha-dystroglycan; modulates interaction with alpha-latrotoxin stretch occupies residues 201–230 (GNNDNERLAIARQRIPYRLGRVVDEWLLDK). 2 residues coordinate Ca(2+): Ile236 and Asn238. Ser346 carries an O-linked (Xyl...) (heparan sulfate) serine glycan. The tract at residues 350-381 (PSDDEDIDPCEPSSGGLANPTRVGGREPYPGS) is disordered. A helical membrane pass occupies residues 392 to 414 (TGMVVGIVAAAALCILILLYAMY). At 415-468 (KYRNRDEGSYHVDESRNYISNSAQSNGAVVKEKQPSSAKSANKNKKNKDKEYYV) the chain is on the cytoplasmic side. Residues 435-468 (NSAQSNGAVVKEKQPSSAKSANKNKKNKDKEYYV) form a disordered region. Residues Ser450, Ser451, and Ser454 each carry the phosphoserine modification.

Belongs to the neurexin family. The cytoplasmic C-terminal region binds to CASK. Binds NLGN1, NLGN2 and NLGN3, DAG1 (alpha-dystroglycan) and alpha-latrotoxin. Binding to neuroligins is calcium-dependent, and the binding preference ranks as follow: NLGN1 &gt; NLGN4 &gt;&gt; NLGN3 &gt; NLGN2. Interacts with CBLN2 and more weakly with CBLN4. Interacts with CBLN1; interaction is CBLN1 hexamer form-dependent; CBLN1-binding is calcium-independent; isoform 1b does not interact with CBLN1. Interacts with CLSTN3. Post-translationally, N-glycosylated. In terms of processing, O-glycosylated; contains heparan sulfate. Heparan sulfate attachment is required for synapse development by mediating interactions with neuroligins. As to expression, brain.

The protein localises to the presynaptic cell membrane. Functionally, neuronal cell surface protein involved in cell recognition and cell adhesion by forming intracellular junctions through binding to neuroligins. Plays a role in formation of synaptic junctions. Functions as part of a trans-synaptic complex by binding to cerebellins and postsynaptic GRID1. This interaction helps regulate the activity of NMDA and AMPA receptors at hippocampal synapses without affecting synapse formation. NRXN1B-CBLN2-GRID1 complex transduce presynaptic signals into postsynaptic NMDAR response. The polypeptide is Neurexin-1-beta (Rattus norvegicus (Rat)).